A 286-amino-acid chain; its full sequence is Pyridoxal kinase PdxY (286 aa).

Substrate contacts are provided by residues serine 9 and 44-45 (TQ). Residues aspartate 111, glutamate 148, and lysine 181 each coordinate ATP. Aspartate 222 contributes to the substrate binding site.

Belongs to the pyridoxine kinase family. PdxY subfamily. As to quaternary structure, homodimer. Mg(2+) is required as a cofactor.

It catalyses the reaction pyridoxal + ATP = pyridoxal 5'-phosphate + ADP + H(+). The protein operates within cofactor metabolism; pyridoxal 5'-phosphate salvage; pyridoxal 5'-phosphate from pyridoxal: step 1/1. Its function is as follows. Pyridoxal kinase involved in the salvage pathway of pyridoxal 5'-phosphate (PLP). Catalyzes the phosphorylation of pyridoxal to PLP. This is Pyridoxal kinase PdxY from Histophilus somni (strain 129Pt) (Haemophilus somnus).